Consider the following 492-residue polypeptide: Aspartyl/glutamyl-tRNA(Asn/Gln) amidotransferase subunit B (492 aa).

Belongs to the GatB/GatE family. GatB subfamily. As to quaternary structure, heterotrimer of A, B and C subunits.

It catalyses the reaction L-glutamyl-tRNA(Gln) + L-glutamine + ATP + H2O = L-glutaminyl-tRNA(Gln) + L-glutamate + ADP + phosphate + H(+). It carries out the reaction L-aspartyl-tRNA(Asn) + L-glutamine + ATP + H2O = L-asparaginyl-tRNA(Asn) + L-glutamate + ADP + phosphate + 2 H(+). Functionally, allows the formation of correctly charged Asn-tRNA(Asn) or Gln-tRNA(Gln) through the transamidation of misacylated Asp-tRNA(Asn) or Glu-tRNA(Gln) in organisms which lack either or both of asparaginyl-tRNA or glutaminyl-tRNA synthetases. The reaction takes place in the presence of glutamine and ATP through an activated phospho-Asp-tRNA(Asn) or phospho-Glu-tRNA(Gln). This is Aspartyl/glutamyl-tRNA(Asn/Gln) amidotransferase subunit B from Azorhizobium caulinodans (strain ATCC 43989 / DSM 5975 / JCM 20966 / LMG 6465 / NBRC 14845 / NCIMB 13405 / ORS 571).